Reading from the N-terminus, the 286-residue chain is Pheromone receptor transcription factor (286 aa).

Position 2 is an N-acetylserine (Ser-2). Ser-2 is subject to Phosphoserine. The 55-residue stretch at 18–72 folds into the MADS-box domain; sequence RRKIEIKFIENKTRRHVTFSKRKHGIMKKAFELSVLTGTQVLLLVVSETGLVYTF. Residues 97-119 are compositionally biased toward acidic residues; it reads PDDEEEDEEEDGDDDDDDDDDGN. A disordered region spans residues 97–137; that stretch reads PDDEEEDEEEDGDDDDDDDDDGNDMQRQQPQQQQPQQQQQV. Positions 122 to 136 are enriched in low complexity; the sequence is QRQQPQQQQPQQQQQ. Phosphoserine is present on Ser-144. The disordered stretch occupies residues 167–264; the sequence is LGGANPNQNS…QQAFANAASP (98 aa). The span at 171 to 246 shows a compositional bias: low complexity; sequence NPNQNSMIQQ…QQQQQQQQQP (76 aa).

Homodimer. Binds DNA with a high specificity in complex with mating-type protein ALPHA1. Also binds DNA with a high specificity as a heterotetramer consisting of an ALPHA2 dimer and an MCM1 dimer. Interacts with YHP1 and YOX1, possibly leading to its inactivation. Interacts with ARG80 and ARG82.

The protein localises to the nucleus. Functionally, transcription factor required for the efficient replication of minichromosomes and the transcriptional regulation of early cell cycle genes. Activates transcription of ECB-dependent genes during the G1/M phase. Genes that contain a ECB (early cell box) element in their transcription regulatory region are transcribed only during G1/M phases. Interacts with the alpha-2 repressor or with the alpha-1 activator thereby regulating the expression of mating-type-specific genes. With ARG80, ARG81 and ARG82, coordinates the expression of arginine anabolic and catabolic genes in response to arginine. In Saccharomyces cerevisiae (strain ATCC 204508 / S288c) (Baker's yeast), this protein is Pheromone receptor transcription factor (MCM1).